A 426-amino-acid chain; its full sequence is Glucose-1-phosphate adenylyltransferase (426 aa).

Residues Tyr100, Gly165, 180-181 (EK), and Ser191 each bind alpha-D-glucose 1-phosphate.

This sequence belongs to the bacterial/plant glucose-1-phosphate adenylyltransferase family. As to quaternary structure, homotetramer.

It catalyses the reaction alpha-D-glucose 1-phosphate + ATP + H(+) = ADP-alpha-D-glucose + diphosphate. It participates in glycan biosynthesis; glycogen biosynthesis. Its function is as follows. Involved in the biosynthesis of ADP-glucose, a building block required for the elongation reactions to produce glycogen. Catalyzes the reaction between ATP and alpha-D-glucose 1-phosphate (G1P) to produce pyrophosphate and ADP-Glc. The protein is Glucose-1-phosphate adenylyltransferase of Acetivibrio thermocellus (strain ATCC 27405 / DSM 1237 / JCM 9322 / NBRC 103400 / NCIMB 10682 / NRRL B-4536 / VPI 7372) (Clostridium thermocellum).